The primary structure comprises 145 residues: uncharacterized protein (145 aa).

Substrate is bound by residues Val97 and Asn121.

This sequence belongs to the D-isomer specific 2-hydroxyacid dehydrogenase family. FDH subfamily.

This is an uncharacterized protein from Saccharomyces cerevisiae (strain ATCC 204508 / S288c) (Baker's yeast).